A 220-amino-acid chain; its full sequence is UPF0319 protein YccT (220 aa).

Positions 1 to 20 are cleaved as a signal peptide; sequence MKAGTLTLLIALCLPISVSA.

It belongs to the UPF0319 family.

This Escherichia fergusonii (strain ATCC 35469 / DSM 13698 / CCUG 18766 / IAM 14443 / JCM 21226 / LMG 7866 / NBRC 102419 / NCTC 12128 / CDC 0568-73) protein is UPF0319 protein YccT.